Reading from the N-terminus, the 215-residue chain is Urease accessory protein UreG (215 aa).

24 to 31 (GPVGSGKT) provides a ligand contact to GTP.

Belongs to the SIMIBI class G3E GTPase family. UreG subfamily. Homodimer. UreD, UreF and UreG form a complex that acts as a GTP-hydrolysis-dependent molecular chaperone, activating the urease apoprotein by helping to assemble the nickel containing metallocenter of UreC. The UreE protein probably delivers the nickel.

It localises to the cytoplasm. Facilitates the functional incorporation of the urease nickel metallocenter. This process requires GTP hydrolysis, probably effectuated by UreG. The chain is Urease accessory protein UreG from Burkholderia ambifaria (strain MC40-6).